The sequence spans 232 residues: Flagellar L-ring protein (232 aa).

The N-terminal stretch at 1 to 21 (MQKNAAHTYAISSLLVLSLTG) is a signal peptide. Cysteine 22 is lipidated: N-palmitoyl cysteine. Cysteine 22 carries the S-diacylglycerol cysteine lipid modification.

It belongs to the FlgH family. As to quaternary structure, the basal body constitutes a major portion of the flagellar organelle and consists of four rings (L,P,S, and M) mounted on a central rod.

It is found in the cell outer membrane. The protein localises to the bacterial flagellum basal body. Assembles around the rod to form the L-ring and probably protects the motor/basal body from shearing forces during rotation. This Shigella boydii serotype 18 (strain CDC 3083-94 / BS512) protein is Flagellar L-ring protein.